The sequence spans 145 residues: Heat shock protein hsp-16.2 (145 aa).

Residues 32-137 (VCRISPSESS…QGRSIPIQQA (106 aa)) enclose the sHSP domain.

This sequence belongs to the small heat shock protein (HSP20) family.

The chain is Heat shock protein hsp-16.2 from Caenorhabditis elegans.